A 435-amino-acid chain; its full sequence is Tol-Pal system protein TolB (435 aa).

The N-terminal stretch at 1–26 (MKIFSPIRLVLAIAALMSVFSAPAFA) is a signal peptide.

The protein belongs to the TolB family. In terms of assembly, the Tol-Pal system is composed of five core proteins: the inner membrane proteins TolA, TolQ and TolR, the periplasmic protein TolB and the outer membrane protein Pal. They form a network linking the inner and outer membranes and the peptidoglycan layer.

Its subcellular location is the periplasm. Functionally, part of the Tol-Pal system, which plays a role in outer membrane invagination during cell division and is important for maintaining outer membrane integrity. The polypeptide is Tol-Pal system protein TolB (Agrobacterium fabrum (strain C58 / ATCC 33970) (Agrobacterium tumefaciens (strain C58))).